Consider the following 585-residue polypeptide: Proline--tRNA ligase (585 aa).

Belongs to the class-II aminoacyl-tRNA synthetase family. ProS type 1 subfamily. As to quaternary structure, homodimer.

Its subcellular location is the cytoplasm. It catalyses the reaction tRNA(Pro) + L-proline + ATP = L-prolyl-tRNA(Pro) + AMP + diphosphate. Its function is as follows. Catalyzes the attachment of proline to tRNA(Pro) in a two-step reaction: proline is first activated by ATP to form Pro-AMP and then transferred to the acceptor end of tRNA(Pro). As ProRS can inadvertently accommodate and process non-cognate amino acids such as alanine and cysteine, to avoid such errors it has two additional distinct editing activities against alanine. One activity is designated as 'pretransfer' editing and involves the tRNA(Pro)-independent hydrolysis of activated Ala-AMP. The other activity is designated 'posttransfer' editing and involves deacylation of mischarged Ala-tRNA(Pro). The misacylated Cys-tRNA(Pro) is not edited by ProRS. The protein is Proline--tRNA ligase of Mycolicibacterium vanbaalenii (strain DSM 7251 / JCM 13017 / BCRC 16820 / KCTC 9966 / NRRL B-24157 / PYR-1) (Mycobacterium vanbaalenii).